Here is a 205-residue protein sequence, read N- to C-terminus: MTAFETESESAAVPVDAAAYREAMSRLASAVHLITTDGPGGRAGFTASAVCSVSDAPPTLLVCINRASSAYAALTQNGTLCVNTLGEGHETVASLFGGRTPVDERFAAGTWRRLPSGAPALTDALVSFDCRIVGRHAVGSHDVLYCAVEAVAASGQADALLYSERRYRTLPRAPRSGSAPAEPARAARALGARPAEGPALALRSA.

Positions 171 to 205 (PRAPRSGSAPAEPARAARALGARPAEGPALALRSA) are disordered.

The protein belongs to the non-flavoprotein flavin reductase family. RutF subfamily.

It catalyses the reaction FMNH2 + NAD(+) = FMN + NADH + 2 H(+). Functionally, catalyzes the reduction of FMN to FMNH2 which is used to reduce pyrimidine by RutA via the Rut pathway. The polypeptide is FMN reductase (NADH) RutF (Methylorubrum extorquens (strain DSM 6343 / CIP 106787 / DM4) (Methylobacterium extorquens)).